The following is a 61-amino-acid chain: Photosystem II reaction center protein K (61 aa).

Positions M1–A24 are excised as a propeptide. A helical membrane pass occupies residues I36 to A56.

The protein belongs to the PsbK family. PSII is composed of 1 copy each of membrane proteins PsbA, PsbB, PsbC, PsbD, PsbE, PsbF, PsbH, PsbI, PsbJ, PsbK, PsbL, PsbM, PsbT, PsbX, PsbY, PsbZ, Psb30/Ycf12, at least 3 peripheral proteins of the oxygen-evolving complex and a large number of cofactors. It forms dimeric complexes.

It is found in the plastid. The protein localises to the chloroplast thylakoid membrane. One of the components of the core complex of photosystem II (PSII). PSII is a light-driven water:plastoquinone oxidoreductase that uses light energy to abstract electrons from H(2)O, generating O(2) and a proton gradient subsequently used for ATP formation. It consists of a core antenna complex that captures photons, and an electron transfer chain that converts photonic excitation into a charge separation. The chain is Photosystem II reaction center protein K from Nymphaea alba (White water-lily).